Reading from the N-terminus, the 92-residue chain is YcgL domain-containing protein Shewana3_2381 (92 aa).

The YcgL domain occupies 1–85 (MLCAVYKSSR…PQVNLLAEHR (85 aa)).

The polypeptide is YcgL domain-containing protein Shewana3_2381 (Shewanella sp. (strain ANA-3)).